Reading from the N-terminus, the 202-residue chain is N-(5'-phosphoribosyl)anthranilate isomerase (202 aa).

Belongs to the TrpF family.

The enzyme catalyses N-(5-phospho-beta-D-ribosyl)anthranilate = 1-(2-carboxyphenylamino)-1-deoxy-D-ribulose 5-phosphate. Its pathway is amino-acid biosynthesis; L-tryptophan biosynthesis; L-tryptophan from chorismate: step 3/5. The sequence is that of N-(5'-phosphoribosyl)anthranilate isomerase from Listeria monocytogenes serovar 1/2a (strain ATCC BAA-679 / EGD-e).